The primary structure comprises 354 residues: 3-isopropylmalate dehydrogenase (354 aa).

Residue 76-87 (GPRWDSAKERPE) coordinates NAD(+). Residues Arg-94, Arg-104, Arg-130, and Asp-215 each contribute to the substrate site. The Mg(2+) site is built by Asp-215, Asp-239, and Asp-243. 273–285 (GSAPDIAGKNKAN) serves as a coordination point for NAD(+).

The protein belongs to the isocitrate and isopropylmalate dehydrogenases family. LeuB type 1 subfamily. In terms of assembly, homodimer. Mg(2+) serves as cofactor. The cofactor is Mn(2+).

Its subcellular location is the cytoplasm. It carries out the reaction (2R,3S)-3-isopropylmalate + NAD(+) = 4-methyl-2-oxopentanoate + CO2 + NADH. It functions in the pathway amino-acid biosynthesis; L-leucine biosynthesis; L-leucine from 3-methyl-2-oxobutanoate: step 3/4. Catalyzes the oxidation of 3-carboxy-2-hydroxy-4-methylpentanoate (3-isopropylmalate) to 3-carboxy-4-methyl-2-oxopentanoate. The product decarboxylates to 4-methyl-2 oxopentanoate. This is 3-isopropylmalate dehydrogenase from Bacillus cereus (strain ATCC 14579 / DSM 31 / CCUG 7414 / JCM 2152 / NBRC 15305 / NCIMB 9373 / NCTC 2599 / NRRL B-3711).